Here is a 37-residue protein sequence, read N- to C-terminus: MKVRSSVKRMCDNCKVIRRHGRVLVICTNVKHKQRQG.

The protein belongs to the bacterial ribosomal protein bL36 family.

In Deinococcus geothermalis (strain DSM 11300 / CIP 105573 / AG-3a), this protein is Large ribosomal subunit protein bL36.